We begin with the raw amino-acid sequence, 147 residues long: Peroxynitrite isomerase (147 aa).

Residue H137 coordinates heme b.

Belongs to the nitrobindin family. In terms of assembly, homodimer. Requires heme b as cofactor.

The enzyme catalyses peroxynitrite = nitrate. It functions in the pathway nitrogen metabolism. In terms of biological role, heme-binding protein able to scavenge peroxynitrite and to protect free L-tyrosine against peroxynitrite-mediated nitration, by acting as a peroxynitrite isomerase that converts peroxynitrite to nitrate. Therefore, this protein likely plays a role in peroxynitrite sensing and in the detoxification of reactive nitrogen and oxygen species (RNS and ROS, respectively). Is able to bind nitric oxide (NO) in vitro, but may act as a sensor of peroxynitrite levels in vivo. The polypeptide is Peroxynitrite isomerase (Frankia alni (strain DSM 45986 / CECT 9034 / ACN14a)).